The primary structure comprises 514 residues: Endogenous retrovirus group PABLB member 1 Env polyprotein (514 aa).

N58 carries an N-linked (GlcNAc...) asparagine glycan. The tract at residues 60 to 316 (STSNVFLQWA…YPYLPHVVNQ (257 aa)) is surface protein. The short motif at 82 to 85 (CWVC) is the CXXC element. N-linked (GlcNAc...) asparagine glycosylation is found at N133, N140, N155, N218, N226, and N267. A transmembrane protein region spans residues 317 to 514 (GTRAIVHRND…QRDIFHSNAP (198 aa)). The fusion peptide stretch occupies residues 328–348 (LPTIFMPSVGLGTVIQHIEAL). Residues N350 and N357 are each glycosylated (N-linked (GlcNAc...) asparagine). The CKS-17 motif lies at 378 to 394 (LQNRMALDILTAAEGGT). A disulfide bridge connects residues C395 and C402. Positions 395-403 (CALIKTECC) match the CX6CC motif. 2 N-linked (GlcNAc...) asparagine glycosylation sites follow: N408 and N412. A helical transmembrane segment spans residues 452–472 (ILIVLATLWSVGIALCCGLYF).

This sequence belongs to the gamma type-C retroviral envelope protein family. HERV class-I R(b) env subfamily. In terms of processing, the CXXC motif is highly conserved across a broad range of retroviral envelope proteins. It is thought to participate in the formation of a labile disulfide bond possibly with the CX6CC motif present in the transmembrane domain. Low expression in placenta and testis.

It is found in the cell membrane. In terms of biological role, retroviral envelope proteins mediate receptor recognition and membrane fusion during early infection. Endogenous envelope proteins may have kept, lost or modified their original function during evolution. This endogenous envelope protein has lost its original fusogenic properties. This Homo sapiens (Human) protein is Endogenous retrovirus group PABLB member 1 Env polyprotein (ERVPABLB-1).